The sequence spans 569 residues: Protein ste7 (569 aa).

2 disordered regions span residues alanine 195 to valine 219 and phenylalanine 255 to isoleucine 274. The segment covering threonine 198–valine 219 has biased composition (low complexity). Positions proline 264–isoleucine 274 are enriched in pro residues.

It belongs to the arrestin family.

In terms of biological role, has a role in promoting meiosis whereby it is involved in establishing the mating pheromone signaling pathway. It also has a role in suppressing meiosis until the conjugation process is complete. The protein is Protein ste7 (ste7) of Schizosaccharomyces pombe (strain 972 / ATCC 24843) (Fission yeast).